Consider the following 388-residue polypeptide: Na(+)/H(+) antiporter NhaA (388 aa).

Over 1–11 the chain is Cytoplasmic; that stretch reads MKHLHRFFSSD. A helical transmembrane segment spans residues 12-31; it reads ASGGIILIIAAILAMIMANS. Residues 32 to 58 are Periplasmic-facing; the sequence is GATSGWYHDFLETPVQLRVGSLEINKN. A helical membrane pass occupies residues 59–80; that stretch reads MLLWINDALMAVFFLLVGLEVK. Over 81–96 the chain is Cytoplasmic; the sequence is RELMQGSLASLLQAAF. Residues 97 to 116 form a helical membrane-spanning segment; the sequence is PVIAAIGGMIVPALLYLAFN. At 117–122 the chain is on the periplasmic side; it reads YADPIT. A helical membrane pass occupies residues 123–130; that stretch reads REGWAIPA. Residues 131 to 154 are Cytoplasmic-facing; sequence ATDIAFALGVLALLGSRVPLVLKI. A helical membrane pass occupies residues 155-176; that stretch reads FLMALAIIDDLGAIIIIALFYT. At 177–180 the chain is on the periplasmic side; sequence NDLS. A helical transmembrane segment spans residues 181 to 200; that stretch reads MASLGVAAVAIAVLAVLNLC. The Cytoplasmic portion of the chain corresponds to 201-204; that stretch reads GVRR. The chain crosses the membrane as a helical span at residues 205-222; sequence TGVYILVGVVLWTAVLKS. Position 223 (Gly223) is a topological domain, periplasmic. A helical transmembrane segment spans residues 224–236; sequence VHATLAGVIVGFF. The Cytoplasmic portion of the chain corresponds to 237–253; sequence IPLKEKHGRSPAKRLEH. The helical transmembrane segment at 254-272 threads the bilayer; the sequence is VLHPWVAYLILPLFAFANA. The Periplasmic portion of the chain corresponds to 273-286; it reads GVSLQGVTLDGLTS. The helical transmembrane segment at 287-310 threads the bilayer; sequence ILPLGIIAGLLIGKPLGISLFCWL. The Cytoplasmic segment spans residues 311 to 339; the sequence is ALRLKLAHLPEGTTYQQIMVVGILCGIGF. Residues 340 to 350 traverse the membrane as a helical segment; sequence TMSIFIASLAF. The Periplasmic portion of the chain corresponds to 351 to 357; that stretch reads GSVDPEL. Residues 358-380 traverse the membrane as a helical segment; that stretch reads INWAKLGILVGSISSAVIGYSWL. Topologically, residues 381-388 are cytoplasmic; it reads RVRLRPSV.

It belongs to the NhaA Na(+)/H(+) (TC 2.A.33) antiporter family.

The protein localises to the cell inner membrane. It catalyses the reaction Na(+)(in) + 2 H(+)(out) = Na(+)(out) + 2 H(+)(in). Na(+)/H(+) antiporter that extrudes sodium in exchange for external protons. This Shigella flexneri serotype 5b (strain 8401) protein is Na(+)/H(+) antiporter NhaA.